The primary structure comprises 328 residues: MQHLKELTEKARNALDALDQGLDALEEFRVEYFGKKGHFTALMQELRNVSAEERPAIGAKINEAKQAILDILNAKKEAWEQEALNAKLAAESIDVSLPGRKTELGGLHPVSITIERVVKFFSELGFTVASGPEIETDYYNFDALNIPAHHPARADHDTFWFDAQRLLRTQTSGVQIRTMENMQPPIRIVAPGRVYRNDYDQTHTPMFHQIELLYVDKKANFTELKGLIHDFLKAFFEEDLQVRFRPSFFPFTEPSAEVDVMRQNGKWLEVLGCGMVHPNVLRNVGIDPEEYSGFAVGMGVERLTMLRYNVTDLRSFFENDLRFLKQFK.

Glu253 contributes to the Mg(2+) binding site.

This sequence belongs to the class-II aminoacyl-tRNA synthetase family. Phe-tRNA synthetase alpha subunit type 1 subfamily. In terms of assembly, tetramer of two alpha and two beta subunits. The cofactor is Mg(2+).

The protein localises to the cytoplasm. The enzyme catalyses tRNA(Phe) + L-phenylalanine + ATP = L-phenylalanyl-tRNA(Phe) + AMP + diphosphate + H(+). The protein is Phenylalanine--tRNA ligase alpha subunit of Actinobacillus pleuropneumoniae serotype 5b (strain L20).